Consider the following 222-residue polypeptide: Probable transaldolase (222 aa).

Lys-91 (schiff-base intermediate with substrate) is an active-site residue.

It belongs to the transaldolase family. Type 3B subfamily.

Its subcellular location is the cytoplasm. The enzyme catalyses D-sedoheptulose 7-phosphate + D-glyceraldehyde 3-phosphate = D-erythrose 4-phosphate + beta-D-fructose 6-phosphate. The protein operates within carbohydrate degradation; pentose phosphate pathway; D-glyceraldehyde 3-phosphate and beta-D-fructose 6-phosphate from D-ribose 5-phosphate and D-xylulose 5-phosphate (non-oxidative stage): step 2/3. Its function is as follows. Transaldolase is important for the balance of metabolites in the pentose-phosphate pathway. The protein is Probable transaldolase of Chlorobium limicola (strain DSM 245 / NBRC 103803 / 6330).